The following is a 230-amino-acid chain: Respiratory supercomplex factor 1, mitochondrial (230 aa).

Residues 1-12 (MADGPPSIPGPL) are compositionally biased toward pro residues. Residues 1 to 20 (MADGPPSIPGPLPSSFDSDQ) form a disordered region. The 92-residue stretch at 12-103 (LPSSFDSDQD…KDREKSKELR (92 aa)) folds into the HIG1 domain. 2 helical membrane-spanning segments follow: residues 40–59 (LIPL…YRAL) and 71–93 (FRAR…MYYQ). Residues 93-156 (QKDREKSKEL…RAEEAEAAAA (64 aa)) adopt a coiled-coil conformation. The tract at residues 153–230 (AAAAAAATTE…GEIISSQKKD (78 aa)) is disordered. Positions 185–196 (GEKKEEEKKVAE) are enriched in basic and acidic residues.

It belongs to the RCF1 family. As to quaternary structure, associates with the respiratory chain complex III/complex IV supercomplex.

The protein resides in the mitochondrion membrane. Functionally, cytochrome c oxidase subunit which plays a role in assembly of respiratory supercomplexes. This is Respiratory supercomplex factor 1, mitochondrial (RCF1) from Fusarium vanettenii (strain ATCC MYA-4622 / CBS 123669 / FGSC 9596 / NRRL 45880 / 77-13-4) (Fusarium solani subsp. pisi).